The following is a 216-amino-acid chain: Imidazole glycerol phosphate synthase subunit HisH (216 aa).

Residues R2–P216 form the Glutamine amidotransferase type-1 domain. Catalysis depends on C88, which acts as the Nucleophile. Active-site residues include H196 and E198.

Heterodimer of HisH and HisF.

It is found in the cytoplasm. The catalysed reaction is 5-[(5-phospho-1-deoxy-D-ribulos-1-ylimino)methylamino]-1-(5-phospho-beta-D-ribosyl)imidazole-4-carboxamide + L-glutamine = D-erythro-1-(imidazol-4-yl)glycerol 3-phosphate + 5-amino-1-(5-phospho-beta-D-ribosyl)imidazole-4-carboxamide + L-glutamate + H(+). It catalyses the reaction L-glutamine + H2O = L-glutamate + NH4(+). The protein operates within amino-acid biosynthesis; L-histidine biosynthesis; L-histidine from 5-phospho-alpha-D-ribose 1-diphosphate: step 5/9. Functionally, IGPS catalyzes the conversion of PRFAR and glutamine to IGP, AICAR and glutamate. The HisH subunit catalyzes the hydrolysis of glutamine to glutamate and ammonia as part of the synthesis of IGP and AICAR. The resulting ammonia molecule is channeled to the active site of HisF. The chain is Imidazole glycerol phosphate synthase subunit HisH from Agrobacterium fabrum (strain C58 / ATCC 33970) (Agrobacterium tumefaciens (strain C58)).